The primary structure comprises 277 residues: Anamorsin homolog 2 (277 aa).

Positions 1–141 (MDTQPIVLVI…RKPAWDTGSS (141 aa)) are N-terminal SAM-like domain. The segment at 141–186 (SFKLKKKVAQKPANVVTFDIPAFKVQLGDDLDDLIDEDSLLTEEDL) is linker. [2Fe-2S] cluster-binding residues include Cys197, Cys207, Cys210, and Cys212. The segment at 197–212 (CEVGKAGRKACKNCTC) is fe-S binding site A. Cys238, Cys241, Cys249, and Cys252 together coordinate [4Fe-4S] cluster. 2 consecutive short sequence motifs (cx2C motif) follow at residues 238-241 (CGSC) and 249-252 (CSTC). The tract at residues 238–252 (CGSCGLGDAFRCSTC) is fe-S binding site B.

This sequence belongs to the anamorsin family. Monomer. [2Fe-2S] cluster is required as a cofactor. [4Fe-4S] cluster serves as cofactor.

The protein resides in the cytoplasm. The protein localises to the mitochondrion intermembrane space. Component of the cytosolic iron-sulfur (Fe-S) protein assembly (CIA) machinery. Required for the maturation of extramitochondrial Fe-S proteins. Part of an electron transfer chain functioning in an early step of cytosolic Fe-S biogenesis, facilitating the de novo assembly of a [4Fe-4S] cluster on the cytosolic Fe-S scaffold complex. Electrons are transferred from NADPH via a FAD- and FMN-containing diflavin oxidoreductase. Together with the diflavin oxidoreductase, also required for the assembly of the diferric tyrosyl radical cofactor of ribonucleotide reductase (RNR), probably by providing electrons for reduction during radical cofactor maturation in the catalytic small subunit. The protein is Anamorsin homolog 2 of Picea sitchensis (Sitka spruce).